The primary structure comprises 273 residues: Glutamate racemase (273 aa).

Substrate is bound by residues 19–20 (DS) and 51–52 (YG). The Proton donor/acceptor role is filled by cysteine 83. Residue 84–85 (NT) participates in substrate binding. Catalysis depends on cysteine 198, which acts as the Proton donor/acceptor. 199–200 (TH) contacts substrate.

The protein belongs to the aspartate/glutamate racemases family.

It carries out the reaction L-glutamate = D-glutamate. The protein operates within cell wall biogenesis; peptidoglycan biosynthesis. Its function is as follows. Provides the (R)-glutamate required for cell wall biosynthesis. This is Glutamate racemase from Agrobacterium fabrum (strain C58 / ATCC 33970) (Agrobacterium tumefaciens (strain C58)).